The sequence spans 57 residues: Large ribosomal subunit protein bL32 (57 aa).

Residues 1 to 23 (MAVPARHTSSAKKNRRRTHYKLT) form a disordered region. Residues 9 to 20 (SSAKKNRRRTHY) show a composition bias toward basic residues.

Belongs to the bacterial ribosomal protein bL32 family.

The sequence is that of Large ribosomal subunit protein bL32 from Lactococcus lactis subsp. cremoris (strain MG1363).